Consider the following 192-residue polypeptide: Ribose 1,5-bisphosphate phosphokinase PhnN (192 aa).

15 to 22 (GPSGAGKD) is an ATP binding site.

Belongs to the ribose 1,5-bisphosphokinase family.

It carries out the reaction alpha-D-ribose 1,5-bisphosphate + ATP = 5-phospho-alpha-D-ribose 1-diphosphate + ADP. It participates in metabolic intermediate biosynthesis; 5-phospho-alpha-D-ribose 1-diphosphate biosynthesis; 5-phospho-alpha-D-ribose 1-diphosphate from D-ribose 5-phosphate (route II): step 3/3. Its function is as follows. Catalyzes the phosphorylation of ribose 1,5-bisphosphate to 5-phospho-D-ribosyl alpha-1-diphosphate (PRPP). The polypeptide is Ribose 1,5-bisphosphate phosphokinase PhnN (Brucella melitensis biotype 2 (strain ATCC 23457)).